A 608-amino-acid chain; its full sequence is NADH-quinone oxidoreductase subunit C/D (608 aa).

The interval 1 to 199 (MSAASSLAPQ…EPFHLSTEKE (199 aa)) is NADH dehydrogenase I subunit C. An NADH dehydrogenase I subunit D region spans residues 223–608 (DFMFLNLGPN…IDFVMADVDR (386 aa)).

The protein in the N-terminal section; belongs to the complex I 30 kDa subunit family. In the C-terminal section; belongs to the complex I 49 kDa subunit family. As to quaternary structure, NDH-1 is composed of 13 different subunits. Subunits NuoB, CD, E, F, and G constitute the peripheral sector of the complex.

It is found in the cell inner membrane. It catalyses the reaction a quinone + NADH + 5 H(+)(in) = a quinol + NAD(+) + 4 H(+)(out). NDH-1 shuttles electrons from NADH, via FMN and iron-sulfur (Fe-S) centers, to quinones in the respiratory chain. The immediate electron acceptor for the enzyme in this species is believed to be ubiquinone. Couples the redox reaction to proton translocation (for every two electrons transferred, four hydrogen ions are translocated across the cytoplasmic membrane), and thus conserves the redox energy in a proton gradient. The sequence is that of NADH-quinone oxidoreductase subunit C/D from Nitrosospira multiformis (strain ATCC 25196 / NCIMB 11849 / C 71).